We begin with the raw amino-acid sequence, 116 residues long: Putative pterin-4-alpha-carbinolamine dehydratase (116 aa).

This sequence belongs to the pterin-4-alpha-carbinolamine dehydratase family.

The enzyme catalyses (4aS,6R)-4a-hydroxy-L-erythro-5,6,7,8-tetrahydrobiopterin = (6R)-L-erythro-6,7-dihydrobiopterin + H2O. This chain is Putative pterin-4-alpha-carbinolamine dehydratase, found in Paracidovorax citrulli (strain AAC00-1) (Acidovorax citrulli).